Here is a 370-residue protein sequence, read N- to C-terminus: L-selectin (370 aa).

Positions 1–28 (MLCPWKCQNAQRGLWNVFKLWVWIMLCC) are cleaved as a signal peptide. A propeptide spanning residues 29-38 (DFFAHHGTDC) is cleaved from the precursor. Topologically, residues 39–333 (WTYHYSKRPM…SINEESDYNP (295 aa)) are extracellular. In terms of domain architecture, C-type lectin spans 55 to 155 (AFCRENYTDL…ACHKAKTALC (101 aa)). Intrachain disulfides connect Cys57–Cys155, Cys128–Cys147, Cys128–Cys160, Cys160–Cys171, Cys165–Cys180, Cys182–Cys191, Cys197–Cys241, Cys227–Cys254, Cys259–Cys303, and Cys289–Cys316. Asn60, Asn77, and Asn104 each carry an N-linked (GlcNAc...) asparagine glycan. Ca(2+)-binding residues include Glu118, Asn120, Glu126, Asn143, and Asp144. The EGF-like domain occupies 156–192 (YTASCKPWSCSGHGQCVEVINNYTCNCDLGYYGPECQ). Residue Asn177 is glycosylated (N-linked (GlcNAc...) asparagine). 2 consecutive Sushi domains span residues 195–256 (TQCV…TCRV) and 257–318 (IQCE…RCQK). N-linked (GlcNAc...) asparagine glycans are attached at residues Asn216, Asn226, and Asn246. Asn308 and Asn320 each carry an N-linked (GlcNAc...) asparagine glycan. Residues 334–354 (LFIPVAVMVTAFSGLAFIIWL) form a helical membrane-spanning segment. Topologically, residues 355–370 (ARRLKRKSKKVSEKHG) are cytoplasmic.

This sequence belongs to the selectin/LECAM family. Interaction with SELPLG/PSGL1 and PODXL2 is required for promoting recruitment and rolling of leukocytes. This interaction is dependent on the sialyl Lewis X glycan modification of SELPLG and PODXL2, and tyrosine sulfation modifications of SELPLG. Sulfation on 'Tyr-51' of SELPLG is important for L-selectin binding. In terms of processing, N-glycosylated. Highly expressed in lymphocytes from peripheral lymph nodes. Low in lymphocytes isolated from Peyer patches.

The protein localises to the cell membrane. In terms of biological role, calcium-dependent lectin that mediates cell adhesion by binding to glycoproteins on neighboring cells. Mediates the adherence of lymphocytes to endothelial cells of high endothelial venules in peripheral lymph nodes. Promotes initial tethering and rolling of leukocytes in endothelia. The polypeptide is L-selectin (SELL) (Bos taurus (Bovine)).